The sequence spans 461 residues: Argininosuccinate lyase (461 aa).

The protein belongs to the lyase 1 family. Argininosuccinate lyase subfamily.

It is found in the cytoplasm. The enzyme catalyses 2-(N(omega)-L-arginino)succinate = fumarate + L-arginine. The protein operates within amino-acid biosynthesis; L-arginine biosynthesis; L-arginine from L-ornithine and carbamoyl phosphate: step 3/3. This chain is Argininosuccinate lyase, found in Bacillus subtilis (strain 168).